Reading from the N-terminus, the 712-residue chain is Polyribonucleotide nucleotidyltransferase (712 aa).

2 residues coordinate Mg(2+): Asp-487 and Asp-493. The KH domain maps to 554-613 (PKIITMTINPDKIRDVIGPSGKQINKIIEETGVKIDIEQDGTVFISSINQEMNDKAKKII). Residues 623 to 691 (GEIYEGKVKR…KQGRVNLSRK (69 aa)) form the S1 motif domain.

This sequence belongs to the polyribonucleotide nucleotidyltransferase family. It depends on Mg(2+) as a cofactor.

The protein resides in the cytoplasm. The catalysed reaction is RNA(n+1) + phosphate = RNA(n) + a ribonucleoside 5'-diphosphate. In terms of biological role, involved in mRNA degradation. Catalyzes the phosphorolysis of single-stranded polyribonucleotides processively in the 3'- to 5'-direction. This chain is Polyribonucleotide nucleotidyltransferase, found in Bacillus cereus (strain G9842).